A 1244-amino-acid polypeptide reads, in one-letter code: Mitotic chromosome and X-chromosome-associated protein mix-1 (1244 aa).

32–39 serves as a coordination point for ATP; that stretch reads GYNGSGKS. Positions 247–355 form a coiled coil; the sequence is VKKSAKEIED…AKRKEHEDSK (109 aa). A compositionally biased stretch (basic and acidic residues) spans 337-355; sequence LSKDREVLDAKRKEHEDSK. The interval 337 to 369 is disordered; that stretch reads LSKDREVLDAKRKEHEDSKAANSKDIQSQSDDE. A compositionally biased stretch (polar residues) spans 356–365; it reads AANSKDIQSQ. A coiled-coil region spans residues 415 to 472; the sequence is ITAAKKRGERLHNQIKHLEGEKATLSARSKSDIGSADNYQKEVDEINKQLQLLGFNID. The region spanning 526 to 654 is the SMC hinge domain; sequence DVFGYVAHLI…DSLDVAREIA (129 aa). Coiled-coil stretches lie at residues 701–946 and 975–1037; these read PQIE…RKEA and YTVS…IATL. The span at 919–932 shows a compositional bias: basic and acidic residues; the sequence is AKTKSKREEKEKEL. Positions 919–943 are disordered; it reads AKTKSKREEKEKELTSLQQSEASNR. Basic and acidic residues predominate over residues 1216-1232; sequence DAAAKKGAQKNDKEPPK. Residues 1216–1244 are disordered; it reads DAAAKKGAQKNDKEPPKKKPIVVDDDDFE.

Belongs to the SMC family. SMC2 subfamily. As to quaternary structure, component of the condensin I complex, which contains the mix-1/SMC2 and smc-4/SMC4 heterodimer, and three non SMC subunits that probably regulate the complex: dpy-26, capg-1 and dpy-28. Within the complex, interacts with smc-4, dpy-26, dpy-28 and capg-1. Interaction with smc-4 is required for mitotic chromosome localization. Component of the condensin II complex, which contains the mix-1/SMC2 and smc-4/SMC4 heterodimer, and three non SMC subunits, capg-2, kle-2 and hcp-6 that probably regulate the complex. Within the complex, interacts with smc-4, capg-2, kle-2 and hcp-6. Also a component of the condensin-like dosage compensation complex, which contains the mix-1/SMC2 and dpy-27/SMC4 heterodimer, and three non SMC subunits that probably regulate the complex: dpy-26, capg-1 and dpy-28. Within the complex, interacts with dpy-27, dpy-26, capg-1 and dpy-28. Requires capg-1 for hermaphrodite X chromosome localization. Interacts with smcl-1. Expressed in embryos and in adult somatic and germline tissues (at protein level).

It is found in the nucleus. The protein resides in the chromosome. Functionally, essential protein required for both chromosome condensation and segregation and X-chromosome dosage compensation depending on its binding partners. Central component of the condensin I complex, a complex required for conversion of interphase chromatin into mitotic-like condense chromosomes. The condensin complex introduces positive supercoils into relaxed DNA in the presence of type I topoisomerases. Converts nicked DNA into positive knotted forms in the presence of type II topoisomerases. Central component of the condensin II complex, a complex that seems to play a role in prophase chromosome condensation and organization. Both the condensin complex I and II play a role in meiotic and mitotic chromosome segregation. Plays a role in robust cytokinesis upon the presence of chromatin obstructions. Also a member of the condensin I-like dosage compensation complex that associates specifically with hermaphrodite X chromosomes to reduce their gene transcription during interphase. This Caenorhabditis elegans protein is Mitotic chromosome and X-chromosome-associated protein mix-1 (mix-1).